Here is a 698-residue protein sequence, read N- to C-terminus: tRNA (guanine(37)-N(1))-methyltransferase (698 aa).

A disordered region spans residues S207–G242. Residues H427, D465–L466, D494–G495, and N536 each bind S-adenosyl-L-methionine.

It belongs to the class I-like SAM-binding methyltransferase superfamily. TRM5/TYW2 family. Monomer.

Its subcellular location is the mitochondrion matrix. It is found in the nucleus. The protein resides in the cytoplasm. It carries out the reaction guanosine(37) in tRNA + S-adenosyl-L-methionine = N(1)-methylguanosine(37) in tRNA + S-adenosyl-L-homocysteine + H(+). In terms of biological role, specifically methylates the N1 position of guanosine-37 in various cytoplasmic and mitochondrial tRNAs. Methylation is not dependent on the nature of the nucleoside 5' of the target nucleoside. This is the first step in the biosynthesis of wybutosine (yW), a modified base adjacent to the anticodon of tRNAs and required for accurate decoding. In Leishmania braziliensis, this protein is tRNA (guanine(37)-N(1))-methyltransferase.